The sequence spans 753 residues: Synaptotagmin-like protein 5 (753 aa).

Positions 7–123 (FINLSFLLDH…IISGEWFLEE (117 aa)) constitute a RabBD domain. Residues 64–106 (CVHCHKTLGLIFDRGDPCQACSLRVCSECRVTGLDGSWKCTVC) form an FYVE-type zinc finger. Disordered stretches follow at residues 145 to 279 (RRSP…SREH), 297 to 359 (LTKS…LNSL), and 380 to 404 (LASG…VPDA). The residue at position 147 (Ser147) is a Phosphoserine. Residues 150–174 (SEETQNQEQAQQCVDKSDTLSSVRQ) are compositionally biased toward polar residues. The segment covering 195 to 206 (TRGEIRTPKPES) has biased composition (basic and acidic residues). The span at 214–223 (LDSQNLQSFK) shows a compositional bias: polar residues. Residues 224–237 (SASGSDRGSTTSSD) show a composition bias toward low complexity. Positions 249–275 (KSSYSNGGIPVTQRSPVPSAHSVTSIN) are enriched in polar residues. A compositionally biased stretch (polar residues) spans 380–391 (LASGLSTNSQAG). 2 consecutive C2 domains span residues 429-550 (VTGE…DEWF) and 597-717 (KRGK…VDWM).

Binds RAB27A that has been activated by GTP-binding.

The protein localises to the membrane. May act as Rab effector protein and play a role in vesicle trafficking. Binds phospholipids. This Mus musculus (Mouse) protein is Synaptotagmin-like protein 5 (Sytl5).